We begin with the raw amino-acid sequence, 932 residues long: MAAQPRGGDCRGFVLLSILLGTPWEAWAGRILYSVSEETDKGSFVGDIAKDLGLEPRELAERGVRIISRGRTQLFALNQRSGSLVTAGRIDREEICAQSARCLVNFNILMEDKMNLYPIDVEIIDINDNVPRFLTEEINVKIMENTAPGVRFPLSEAGDPDVGTNSLQSYQLSPNRHFSLAVQSGDDGTKYPELVLERVLDREEERVHHLVLTASDGGDPPRSSTAHIQVTVVDVNDHTPVFSLPQYQVTVPENVPVGTRLLTVHAIDLDEGVNGEVTYSFRKITPKLPQMFHLNSLTGEISTLEGLDYEETAFYEMEVQAQDGPGSLTKAKVLITVLDVNDNAPEVTMTSLSSSIPEDTPLGTVIALFYLQDRDSGKNGEVTCTIPENLPFKLEKSIDNYYRLVTTKNLDRETLSLYNITLKATDGGTPPLSRETHIFMQVADTNDNPPTFPHSSYSVYIAENNPRGASIFLVTAQDHDSEDNAQITYSLAEDTIQGAPVSSYVSINSDTGVLYALQSFDYEQLRELQLRVTAHDSGDPPLSSNMSLSLFVLDQNDNPPEILYPALPTDGSTGMELAPRSAEPGYLVTKVVAVDKDSGQNAWLSYLLLKASEPGLFAVGLYTGEVRTARALLDRDALKQSLVVAVQDHGQPPLSATVTLTVAVADSIPEVLADLGSLEPSDGPYNYDLTLYLVVAVAAVSCVFLAFVLVLLALRLRRWHKSRLLQASEGGLASVPTSHFVGMDRVQAFLQTYSHEVSLTADSRKSHLIFPQPNYVDMLISQESCEKNDSLLTSVDFQECKDDVPSIQQAPPNTDWRFSQAQRPGTSGSQNGDDTGTWPNNQFDTEMLQAMILASASEAADGSSTLGGGAGTMGLSARYGPQFTLQHVPDYRQNVYIPGSNATLTNAAGKRDGKAPAGGNGNKKKSGKKEKK.

Positions 1-28 (MAAQPRGGDCRGFVLLSILLGTPWEAWA) are cleaved as a signal peptide. 6 Cadherin domains span residues 29 to 133 (GRIL…VPRF), 134 to 242 (LTEE…TPVF), 243 to 347 (SLPQ…APEV), 348 to 452 (TMTS…PPTF), 453 to 562 (PHSS…PPEI), and 570 to 682 (DGST…EPSD). Residues 29 to 692 (GRILYSVSEE…GPYNYDLTLY (664 aa)) are Extracellular-facing. Asparagine 419 and asparagine 545 each carry an N-linked (GlcNAc...) asparagine glycan. The helical transmembrane segment at 693-713 (LVVAVAAVSCVFLAFVLVLLA) threads the bilayer. Topologically, residues 714 to 932 (LRLRRWHKSR…KKKSGKKEKK (219 aa)) are cytoplasmic. 2 disordered regions span residues 804 to 841 (VPSI…WPNN) and 902 to 932 (ATLT…KEKK). A compositionally biased stretch (polar residues) spans 806–841 (SIQQAPPNTDWRFSQAQRPGTSGSQNGDDTGTWPNN). Positions 922–932 (NKKKSGKKEKK) are enriched in basic residues.

It localises to the cell membrane. Potential calcium-dependent cell-adhesion protein. May be involved in the establishment and maintenance of specific neuronal connections in the brain. The polypeptide is Protocadherin gamma-A7 (PCDHGA7) (Pan troglodytes (Chimpanzee)).